The following is a 392-amino-acid chain: Tryptophan synthase beta chain (392 aa).

An N6-(pyridoxal phosphate)lysine modification is found at Lys-84.

It belongs to the TrpB family. Tetramer of two alpha and two beta chains. Pyridoxal 5'-phosphate is required as a cofactor.

It carries out the reaction (1S,2R)-1-C-(indol-3-yl)glycerol 3-phosphate + L-serine = D-glyceraldehyde 3-phosphate + L-tryptophan + H2O. The protein operates within amino-acid biosynthesis; L-tryptophan biosynthesis; L-tryptophan from chorismate: step 5/5. Functionally, the beta subunit is responsible for the synthesis of L-tryptophan from indole and L-serine. The chain is Tryptophan synthase beta chain from Campylobacter jejuni subsp. jejuni serotype O:6 (strain 81116 / NCTC 11828).